Reading from the N-terminus, the 331-residue chain is Uroporphyrinogen decarboxylase (331 aa).

Substrate is bound by residues 22 to 26 (RQAGR), Asp-71, Tyr-145, Ser-199, and His-308.

This sequence belongs to the uroporphyrinogen decarboxylase family. As to quaternary structure, homodimer.

It localises to the cytoplasm. The catalysed reaction is uroporphyrinogen III + 4 H(+) = coproporphyrinogen III + 4 CO2. It functions in the pathway porphyrin-containing compound metabolism; protoporphyrin-IX biosynthesis; coproporphyrinogen-III from 5-aminolevulinate: step 4/4. Catalyzes the decarboxylation of four acetate groups of uroporphyrinogen-III to yield coproporphyrinogen-III. The chain is Uroporphyrinogen decarboxylase from Picrophilus torridus (strain ATCC 700027 / DSM 9790 / JCM 10055 / NBRC 100828 / KAW 2/3).